A 240-amino-acid chain; its full sequence is Phosducin-like protein 3 (240 aa).

N-acetylmethionine is present on Met-1. In terms of domain architecture, Phosducin spans 27 to 181; the sequence is KELEEEEAEK…EGDIKAQFIG (155 aa). 4 positions are modified to phosphoserine: Ser-44, Ser-65, Ser-235, and Ser-237. The segment at 92-240 is thioredoxin fold; that stretch reads FGEVLEISGK…MRRDSDSEDD (149 aa).

It belongs to the phosducin family. As to quaternary structure, interacts (via thioredoxin fold region) with KDR/VEGFR2 (via juxtamembrane domain). Forms ternary complexes with the chaperonin CCT complex and actin substrate, leading to inhibition of actin folding. Interacts with XIAP (via BIR 3 and RING domain). Interacts with HSP90AA1 and HSP90AB1. Post-translationally, N-terminal methionine acetylation destabilizes the protein. As to expression, expressed in blood vessels (at protein level).

Its subcellular location is the cytoplasm. It is found in the perinuclear region. The protein localises to the endoplasmic reticulum. Its function is as follows. Acts as a chaperone for the angiogenic VEGF receptor KDR/VEGFR2, increasing its abundance by inhibiting its ubiquitination and degradation. Inhibits the folding activity of the chaperonin-containing T-complex (CCT) which leads to inhibition of cytoskeletal actin folding. Acts as a chaperone during heat shock alongside HSP90 and HSP40/70 chaperone complexes. Modulates the activation of caspases during apoptosis. The protein is Phosducin-like protein 3 (Pdcl3) of Mus musculus (Mouse).